The primary structure comprises 88 residues: Arminin 1a (88 aa).

An N-terminal signal peptide occupies residues 1 to 18 (MKTVLAFLFLPFIAFTHA). The propeptide occupies 19–57 (ESYEDVKEEIKNEAEKEIFEDLEEESDALDSSVREFNDA). Residue V85 is modified to Valine amide.

This sequence belongs to the arminin family. As to expression, expressed in entodermal epithelium along the body column.

The protein resides in the secreted. It localises to the target cell membrane. Antimicrobial peptide with a broad-spectrum antimicrobial activity. Shows very strong bactericidal activity against B.megaterium (MBC=0.1 uM), E.coli (MBC=0.2 uM), S.aureus (MBC=0.4 uM), methicillin-resistant S.aureus (MRSA) (MBC=0.4-0.8 uM), vancomycin-resistant enterococci (VRE) (E.faecalis (MBC=1.6 uM), and E.faecium (MBC=0.4-0.8 uM)), and extended-spectrum beta-lactamase (ESBL)-producing enterobacteriaceae strains (K.pneumoniae (MBC=0.4-0.8 uM), E.coli (MBC=0.2-0.4 uM)). Keeps its antibacterial activity under a wide range of salt concentrations that mimic physiological conditions of human blood, which is surprising, since Hydra is an obligate freshwater animal with nearly no salt tolerance. Does not affect red blood cells. This chain is Arminin 1a, found in Hydra vulgaris (Hydra).